Here is a 104-residue protein sequence, read N- to C-terminus: ATP-dependent Clp protease adapter protein ClpS (104 aa).

The interval 1–20 (MAEETPTRSPGGAAVLDKAP) is disordered.

This sequence belongs to the ClpS family. As to quaternary structure, binds to the N-terminal domain of the chaperone ClpA.

Its function is as follows. Involved in the modulation of the specificity of the ClpAP-mediated ATP-dependent protein degradation. This Synechococcus sp. (strain CC9902) protein is ATP-dependent Clp protease adapter protein ClpS.